The sequence spans 197 residues: uncharacterized protein (197 aa).

Positions 1 to 10 (MKNNYTSLKS) are enriched in polar residues. Disordered regions lie at residues 1–46 (MKNN…PPYS) and 54–73 (LVPEDSSTGPTETANPNVER). A compositionally biased stretch (basic and acidic residues) spans 18-37 (LKTGHEIDLEKGPLPEHNSE). A compositionally biased stretch (polar residues) spans 58–69 (DSSTGPTETANP). The next 2 helical transmembrane spans lie at 83 to 105 (NIYSLLRLLIAVLAVSVVFFTAW) and 120 to 142 (AFFVLIGLTCLILLITMILEPGL).

The protein belongs to the WTF family.

It is found in the endoplasmic reticulum membrane. This is an uncharacterized protein from Schizosaccharomyces pombe (strain 972 / ATCC 24843) (Fission yeast).